The sequence spans 359 residues: Hsp70-binding protein 1 (359 aa).

A disordered region spans residues 1–71 (MSDEGSRGSR…PPPEPMSEER (71 aa)). Residues 23–37 (SSGGGGGGSSAGGSG) show a composition bias toward gly residues. ARM repeat units lie at residues 132-174 (ENMD…TCSQ), 177-217 (AAIQ…CLVR), 220-259 (EAGL…NLLV), and 262-301 (PEHK…SLVT). Residues Ser351 and Ser356 each carry the phosphoserine modification.

Interacts with the ATP-binding domain of HSPA1A. Detected in a ternary complex containing STUB1, HSPA1A and HSPBP1. Interacts with PGLYRP1; this interaction blocks the cytotoxic activity of the PGLYRP1-HSPA1A complex. As to expression, ubiquitous.

Functionally, inhibits HSPA1A chaperone activity by changing the conformation of the ATP-binding domain of HSPA1A and interfering with ATP binding. Interferes with ubiquitination mediated by STUB1 and inhibits chaperone-assisted degradation of immature CFTR. In Homo sapiens (Human), this protein is Hsp70-binding protein 1.